A 428-amino-acid chain; its full sequence is GTPase HflX (428 aa).

The 161-residue stretch at 214–374 (PVVAIVGYTN…AIERELFKET (161 aa)) folds into the Hflx-type G domain. Residues 220-227 (GYTNAGKS), 245-249 (FATLD), 267-270 (DTVG), 333-336 (NKID), and 352-354 (SAK) contribute to the GTP site. Ser-227 and Thr-247 together coordinate Mg(2+).

This sequence belongs to the TRAFAC class OBG-HflX-like GTPase superfamily. HflX GTPase family. As to quaternary structure, monomer. Associates with the 50S ribosomal subunit. Requires Mg(2+) as cofactor.

The protein localises to the cytoplasm. In terms of biological role, GTPase that associates with the 50S ribosomal subunit and may have a role during protein synthesis or ribosome biogenesis. This is GTPase HflX from Caldanaerobacter subterraneus subsp. tengcongensis (strain DSM 15242 / JCM 11007 / NBRC 100824 / MB4) (Thermoanaerobacter tengcongensis).